The chain runs to 433 residues: tRNA(Ile)-lysidine synthase (433 aa).

27–32 (SGGLDS) serves as a coordination point for ATP.

This sequence belongs to the tRNA(Ile)-lysidine synthase family.

The protein resides in the cytoplasm. The enzyme catalyses cytidine(34) in tRNA(Ile2) + L-lysine + ATP = lysidine(34) in tRNA(Ile2) + AMP + diphosphate + H(+). Its function is as follows. Ligates lysine onto the cytidine present at position 34 of the AUA codon-specific tRNA(Ile) that contains the anticodon CAU, in an ATP-dependent manner. Cytidine is converted to lysidine, thus changing the amino acid specificity of the tRNA from methionine to isoleucine. This is tRNA(Ile)-lysidine synthase from Legionella pneumophila subsp. pneumophila (strain Philadelphia 1 / ATCC 33152 / DSM 7513).